Here is a 261-residue protein sequence, read N- to C-terminus: MIVKTRAVVLREIKYRDQSKICTLFTSEFGKLTAILKGGRNPKSRLSGKFSAGNVLDIVLYKKNGRDIQLISDGSLLFSPLSAEPDMERFATMYRIIDLISQALEGEEKNLPLFSLLTGVLEILYSTEERFELLFIWFLLRMISTLGFEPSLDRCVYSGEPLSAAAETMMLRELSFVMNPGGVALPAAALRQISQQHSITMPAYRLLSELSSTPLSALDEVDAGKAETEFLCKLLQEYCRLHLDHTPRNRNLAVVAQMLSK.

This sequence belongs to the RecO family.

Its function is as follows. Involved in DNA repair and RecF pathway recombination. This is DNA repair protein RecO from Chlorobium limicola (strain DSM 245 / NBRC 103803 / 6330).